The chain runs to 347 residues: GMP reductase (347 aa).

NADP(+) is bound at residue 108–131 (ADFEKTKQILDLNPALNFVCIDVA). Positions 181 and 183 each coordinate K(+). Cysteine 186 acts as the Thioimidate intermediate in catalysis. 216-239 (IVSDGGCTTPGDVAKAFGGGADFV) serves as a coordination point for NADP(+).

This sequence belongs to the IMPDH/GMPR family. GuaC type 1 subfamily. In terms of assembly, homotetramer.

It catalyses the reaction IMP + NH4(+) + NADP(+) = GMP + NADPH + 2 H(+). In terms of biological role, catalyzes the irreversible NADPH-dependent deamination of GMP to IMP. It functions in the conversion of nucleobase, nucleoside and nucleotide derivatives of G to A nucleotides, and in maintaining the intracellular balance of A and G nucleotides. The chain is GMP reductase from Shigella flexneri.